Consider the following 289-residue polypeptide: Enoyl-CoA delta isomerase 1, mitochondrial (289 aa).

The transit peptide at 1–28 (MALAAARRVLLQAGSRLGRRGAVDGARR) directs the protein to the mitochondrion. An N6-acetyllysine; alternate modification is found at K48. K48 carries the post-translational modification N6-succinyllysine; alternate. Residue K71 is modified to N6-succinyllysine. The residue at position 76 (K76) is an N6-acetyllysine. Substrate contacts are provided by residues 93–97 (AGLDL), G140, and N164. N6-acetyllysine; alternate occurs at positions 222, 229, and 255. N6-succinyllysine; alternate occurs at positions 222, 229, and 255. The residue at position 275 (K275) is an N6-succinyllysine. K283 carries the post-translational modification N6-acetyllysine; alternate. At K283 the chain carries N6-succinyllysine; alternate.

The protein belongs to the enoyl-CoA hydratase/isomerase family. In terms of assembly, homotrimer.

The protein resides in the mitochondrion matrix. The enzyme catalyses a (3Z)-enoyl-CoA = a 4-saturated (2E)-enoyl-CoA. It catalyses the reaction a (3E)-enoyl-CoA = a 4-saturated (2E)-enoyl-CoA. It carries out the reaction (3Z)-octenoyl-CoA = (2E)-octenoyl-CoA. The catalysed reaction is (2E)-tetradecenoyl-CoA = (3Z)-tetradecenoyl-CoA. The enzyme catalyses (3Z)-dodecenoyl-CoA = (2E)-dodecenoyl-CoA. It catalyses the reaction (3Z)-hexenoyl-CoA = (2E)-hexenoyl-CoA. It carries out the reaction (3Z)-decenoyl-CoA = (2E)-decenoyl-CoA. It participates in lipid metabolism; fatty acid beta-oxidation. Its function is as follows. Key enzyme of fatty acid beta-oxidation. Able to isomerize both 3-cis (3Z) and 3-trans (3E) double bonds into the 2-trans (2E) form in a range of enoyl-CoA species, with a preference for (3Z)-enoyl-CoAs over (3E)-enoyl-CoAs. The catalytic efficiency of this enzyme is not affected by the fatty acyl chain length. In Rattus norvegicus (Rat), this protein is Enoyl-CoA delta isomerase 1, mitochondrial.